We begin with the raw amino-acid sequence, 384 residues long: Probable endopolygalacturonase C (384 aa).

The first 19 residues, M1–A19, serve as a signal peptide directing secretion. The propeptide occupies A20 to K40. A disulfide bond links C45 and C63. PbH1 repeat units follow at residues A176–E207 and S208–S229. The Proton donor role is filled by D222. A disulfide bridge links C224 with C240. H244 is an active-site residue. 2 PbH1 repeats span residues R254–A280 and I288–Q310. N-linked (GlcNAc...) asparagine glycosylation is present at N261. 2 disulfide bridges follow: C349–C354 and C373–C382.

It belongs to the glycosyl hydrolase 28 family.

The protein resides in the secreted. It carries out the reaction (1,4-alpha-D-galacturonosyl)n+m + H2O = (1,4-alpha-D-galacturonosyl)n + (1,4-alpha-D-galacturonosyl)m.. Involved in maceration and soft-rotting of plant tissue. Hydrolyzes the 1,4-alpha glycosidic bonds of de-esterified pectate in the smooth region of the plant cell wall. The polypeptide is Probable endopolygalacturonase C (pgaC) (Aspergillus aculeatus).